The chain runs to 200 residues: dITP/XTP pyrophosphatase (200 aa).

8-13 serves as a coordination point for substrate; the sequence is TGNQGK. The active-site Proton acceptor is Asp69. Residue Asp69 participates in Mg(2+) binding. Residues Ser70, 154–157, Lys177, and 182–183 contribute to the substrate site; these read FGYD and HR.

This sequence belongs to the HAM1 NTPase family. In terms of assembly, homodimer. It depends on Mg(2+) as a cofactor.

The catalysed reaction is XTP + H2O = XMP + diphosphate + H(+). It carries out the reaction dITP + H2O = dIMP + diphosphate + H(+). It catalyses the reaction ITP + H2O = IMP + diphosphate + H(+). Functionally, pyrophosphatase that catalyzes the hydrolysis of nucleoside triphosphates to their monophosphate derivatives, with a high preference for the non-canonical purine nucleotides XTP (xanthosine triphosphate), dITP (deoxyinosine triphosphate) and ITP. Seems to function as a house-cleaning enzyme that removes non-canonical purine nucleotides from the nucleotide pool, thus preventing their incorporation into DNA/RNA and avoiding chromosomal lesions. The chain is dITP/XTP pyrophosphatase from Vibrio vulnificus (strain CMCP6).